Consider the following 605-residue polypeptide: Sulfite reductase [NADPH] flavoprotein alpha-component (605 aa).

A Flavodoxin-like domain is found at 70–208 (LTIIYASQTG…PAAEWRVKAL (139 aa)). FMN is bound by residues 76-81 (SQTGNA), 123-126 (STHG), and 159-168 (LGDSSYEFFC). The 215-residue stretch at 240 to 454 (QNPYEATLLT…VEENNNFKLP (215 aa)) folds into the FAD-binding FR-type domain. FAD contacts are provided by residues threonine 328, glycine 362, 392–395 (RLYS), 410–412 (TVG), and 425–428 (GGAS). NADP(+)-binding positions include 525-526 (SR), 531-535 (KVYVQ), and aspartate 567. Position 605 (tyrosine 605) interacts with FAD.

This sequence belongs to the NADPH-dependent sulphite reductase flavoprotein subunit CysJ family. The protein in the N-terminal section; belongs to the flavodoxin family. In the C-terminal section; belongs to the flavoprotein pyridine nucleotide cytochrome reductase family. In terms of assembly, alpha(8)-beta(8). The alpha component is a flavoprotein, the beta component is a hemoprotein. FAD serves as cofactor. Requires FMN as cofactor.

The catalysed reaction is hydrogen sulfide + 3 NADP(+) + 3 H2O = sulfite + 3 NADPH + 4 H(+). It functions in the pathway sulfur metabolism; hydrogen sulfide biosynthesis; hydrogen sulfide from sulfite (NADPH route): step 1/1. Component of the sulfite reductase complex that catalyzes the 6-electron reduction of sulfite to sulfide. This is one of several activities required for the biosynthesis of L-cysteine from sulfate. The flavoprotein component catalyzes the electron flow from NADPH -&gt; FAD -&gt; FMN to the hemoprotein component. The sequence is that of Sulfite reductase [NADPH] flavoprotein alpha-component from Photobacterium profundum (strain SS9).